A 957-amino-acid chain; its full sequence is Glycine dehydrogenase (decarboxylating) (957 aa).

Lys708 bears the N6-(pyridoxal phosphate)lysine mark.

It belongs to the GcvP family. In terms of assembly, the glycine cleavage system is composed of four proteins: P, T, L and H. It depends on pyridoxal 5'-phosphate as a cofactor.

The catalysed reaction is N(6)-[(R)-lipoyl]-L-lysyl-[glycine-cleavage complex H protein] + glycine + H(+) = N(6)-[(R)-S(8)-aminomethyldihydrolipoyl]-L-lysyl-[glycine-cleavage complex H protein] + CO2. Its function is as follows. The glycine cleavage system catalyzes the degradation of glycine. The P protein binds the alpha-amino group of glycine through its pyridoxal phosphate cofactor; CO(2) is released and the remaining methylamine moiety is then transferred to the lipoamide cofactor of the H protein. This Escherichia coli (strain SE11) protein is Glycine dehydrogenase (decarboxylating).